Reading from the N-terminus, the 363-residue chain is Chorismate synthase (363 aa).

Positions 48 and 54 each coordinate NADP(+). Residues 125–127 (RSS), 237–238 (NA), glycine 277, 292–296 (KPTSS), and arginine 318 each bind FMN.

The protein belongs to the chorismate synthase family. Homotetramer. It depends on FMNH2 as a cofactor.

It catalyses the reaction 5-O-(1-carboxyvinyl)-3-phosphoshikimate = chorismate + phosphate. Its pathway is metabolic intermediate biosynthesis; chorismate biosynthesis; chorismate from D-erythrose 4-phosphate and phosphoenolpyruvate: step 7/7. In terms of biological role, catalyzes the anti-1,4-elimination of the C-3 phosphate and the C-6 proR hydrogen from 5-enolpyruvylshikimate-3-phosphate (EPSP) to yield chorismate, which is the branch point compound that serves as the starting substrate for the three terminal pathways of aromatic amino acid biosynthesis. This reaction introduces a second double bond into the aromatic ring system. The sequence is that of Chorismate synthase from Ectopseudomonas mendocina (strain ymp) (Pseudomonas mendocina).